Reading from the N-terminus, the 181-residue chain is Protein GrpE (181 aa).

It belongs to the GrpE family. As to quaternary structure, homodimer.

It localises to the cytoplasm. Functionally, participates actively in the response to hyperosmotic and heat shock by preventing the aggregation of stress-denatured proteins, in association with DnaK and GrpE. It is the nucleotide exchange factor for DnaK and may function as a thermosensor. Unfolded proteins bind initially to DnaJ; upon interaction with the DnaJ-bound protein, DnaK hydrolyzes its bound ATP, resulting in the formation of a stable complex. GrpE releases ADP from DnaK; ATP binding to DnaK triggers the release of the substrate protein, thus completing the reaction cycle. Several rounds of ATP-dependent interactions between DnaJ, DnaK and GrpE are required for fully efficient folding. The chain is Protein GrpE from Leptothrix cholodnii (strain ATCC 51168 / LMG 8142 / SP-6) (Leptothrix discophora (strain SP-6)).